The primary structure comprises 127 residues: Adult-specific rigid cuticular protein 12.6 (127 aa).

The 79-residue stretch at 9–87 (GPAYNFGYNT…ALAALAPKAP (79 aa)) folds into the Chitin-binding type R&amp;R domain.

Component of the rigid cuticle of the spider. This Araneus diadematus (European garden spider) protein is Adult-specific rigid cuticular protein 12.6.